Here is a 311-residue protein sequence, read N- to C-terminus: Reaction center protein L chain (311 aa).

The next 3 helical transmembrane spans lie at 68–90 (FWGF…ETIL), 123–151 (GFAW…SMKL), and 156–178 (HVPI…RPIA). Residues H183 and H213 each coordinate (7R,8Z)-bacteriochlorophyll b. The chain crosses the membrane as a helical span at residues 211–238 (PFHAIGITGLFASTWLLACHGSLILSAA). H230 provides a ligand contact to Fe cation. F253 lines the a ubiquinone pocket. Residues 262 to 287 (GESGVHRLGYIFAIGGILSADLCILL) traverse the membrane as a helical segment. H267 is a Fe cation binding site.

The protein belongs to the reaction center PufL/M/PsbA/D family. As to quaternary structure, reaction center is composed of four bacteriochlorophylls, two bacteriopheophytins, two ubiquinones, one iron, and two highly hydrophobic polypeptide chains (designated L and M).

It is found in the cell membrane. The reaction center is a membrane-bound complex that mediates the initial photochemical event in the electron transfer process of photosynthesis. The protein is Reaction center protein L chain (pufL) of Chloroflexus aurantiacus (strain ATCC 29366 / DSM 635 / J-10-fl).